Consider the following 307-residue polypeptide: Small ribosomal subunit biogenesis GTPase RsgA (307 aa).

A CP-type G domain is found at 78–240 (HKTAFGHLIA…VIDTPGIKEL (163 aa)). GTP is bound by residues 128–131 (NKSD) and 182–190 (GHSGVGKST). Residues cysteine 264, cysteine 269, histidine 271, and cysteine 277 each coordinate Zn(2+).

Belongs to the TRAFAC class YlqF/YawG GTPase family. RsgA subfamily. Monomer. Associates with 30S ribosomal subunit, binds 16S rRNA. Zn(2+) serves as cofactor.

The protein localises to the cytoplasm. One of several proteins that assist in the late maturation steps of the functional core of the 30S ribosomal subunit. Helps release RbfA from mature subunits. May play a role in the assembly of ribosomal proteins into the subunit. Circularly permuted GTPase that catalyzes slow GTP hydrolysis, GTPase activity is stimulated by the 30S ribosomal subunit. The polypeptide is Small ribosomal subunit biogenesis GTPase RsgA (Cytophaga hutchinsonii (strain ATCC 33406 / DSM 1761 / CIP 103989 / NBRC 15051 / NCIMB 9469 / D465)).